The sequence spans 262 residues: Putative BTB/POZ domain-containing protein L834 (262 aa).

A BTB domain is found at 16–86; that stretch reads FDVVVELTDE…FYKKNIQPCI (71 aa).

The protein belongs to the mimivirus BTB/WD family.

The sequence is that of Putative BTB/POZ domain-containing protein L834 from Acanthamoeba polyphaga (Amoeba).